Here is a 111-residue protein sequence, read N- to C-terminus: Aquaporin-2 (111 aa).

Residues 1-6 (SIAFSR) are Cytoplasmic-facing. Residues 7-27 (AVFSEFLATLLFVFFGLGSAL) traverse the membrane as a helical segment. Topologically, residues 28–37 (NWPSTVPIPT) are extracellular. The helical transmembrane segment at 38-56 (VLQISMAFGLAIGTLVQTL) threads the bilayer. Residues 57 to 61 (GHISG) lie on the Cytoplasmic side of the membrane. Positions 62-71 (AHINPAVTVA) form an intramembrane region, discontinuously helical. An NPA 1 motif is present at residues 65 to 67 (NPA). Residues 72 to 82 (CLVGCHVSFLR) lie on the Cytoplasmic side of the membrane. Residues 83–104 (ATFYVAAQLLGAVAGAALLHKL) traverse the membrane as a helical segment. The Extracellular segment spans residues 105–111 (TPEDIRG).

It belongs to the MIP/aquaporin (TC 1.A.8) family. As to quaternary structure, homotetramer. Post-translationally, serine phosphorylation is necessary and sufficient for expression at the apical membrane. Endocytosis is not phosphorylation-dependent. N-glycosylated.

Its subcellular location is the apical cell membrane. It is found in the basolateral cell membrane. The protein resides in the cell membrane. It localises to the cytoplasmic vesicle membrane. The protein localises to the golgi apparatus. Its subcellular location is the trans-Golgi network membrane. The enzyme catalyses H2O(in) = H2O(out). The catalysed reaction is glycerol(in) = glycerol(out). In terms of biological role, forms a water-specific channel that provides the plasma membranes of renal collecting duct with high permeability to water, thereby permitting water to move in the direction of an osmotic gradient. Plays an essential role in renal water homeostasis. Could also be permeable to glycerol. This chain is Aquaporin-2, found in Macroscelides proboscideus (Short-eared elephant shrew).